Here is a 362-residue protein sequence, read N- to C-terminus: Peptide chain release factor 1 (362 aa).

N5-methylglutamine is present on glutamine 240.

Belongs to the prokaryotic/mitochondrial release factor family. Methylated by PrmC. Methylation increases the termination efficiency of RF1.

The protein localises to the cytoplasm. Its function is as follows. Peptide chain release factor 1 directs the termination of translation in response to the peptide chain termination codons UAG and UAA. This chain is Peptide chain release factor 1, found in Bifidobacterium longum subsp. infantis (strain ATCC 15697 / DSM 20088 / JCM 1222 / NCTC 11817 / S12).